The sequence spans 144 residues: Small ribosomal subunit protein eS17 (144 aa).

The protein belongs to the eukaryotic ribosomal protein eS17 family.

This is Small ribosomal subunit protein eS17 (RPS17) from Solanum lycopersicum (Tomato).